The chain runs to 425 residues: Enolase (425 aa).

Gln-163 serves as a coordination point for (2R)-2-phosphoglycerate. Catalysis depends on Glu-205, which acts as the Proton donor. Mg(2+) is bound by residues Asp-242, Glu-286, and Asp-313. Residues Lys-338, Arg-367, Ser-368, and Lys-389 each coordinate (2R)-2-phosphoglycerate. Catalysis depends on Lys-338, which acts as the Proton acceptor.

It belongs to the enolase family. The cofactor is Mg(2+).

It is found in the cytoplasm. It localises to the secreted. The protein localises to the cell surface. The enzyme catalyses (2R)-2-phosphoglycerate = phosphoenolpyruvate + H2O. It functions in the pathway carbohydrate degradation; glycolysis; pyruvate from D-glyceraldehyde 3-phosphate: step 4/5. Functionally, catalyzes the reversible conversion of 2-phosphoglycerate (2-PG) into phosphoenolpyruvate (PEP). It is essential for the degradation of carbohydrates via glycolysis. The polypeptide is Enolase (Lactobacillus delbrueckii subsp. bulgaricus (strain ATCC 11842 / DSM 20081 / BCRC 10696 / JCM 1002 / NBRC 13953 / NCIMB 11778 / NCTC 12712 / WDCM 00102 / Lb 14)).